The chain runs to 100 residues: Aspartyl/glutamyl-tRNA(Asn/Gln) amidotransferase subunit C (100 aa).

The protein belongs to the GatC family. In terms of assembly, heterotrimer of A, B and C subunits.

It catalyses the reaction L-glutamyl-tRNA(Gln) + L-glutamine + ATP + H2O = L-glutaminyl-tRNA(Gln) + L-glutamate + ADP + phosphate + H(+). It carries out the reaction L-aspartyl-tRNA(Asn) + L-glutamine + ATP + H2O = L-asparaginyl-tRNA(Asn) + L-glutamate + ADP + phosphate + 2 H(+). In terms of biological role, allows the formation of correctly charged Asn-tRNA(Asn) or Gln-tRNA(Gln) through the transamidation of misacylated Asp-tRNA(Asn) or Glu-tRNA(Gln) in organisms which lack either or both of asparaginyl-tRNA or glutaminyl-tRNA synthetases. The reaction takes place in the presence of glutamine and ATP through an activated phospho-Asp-tRNA(Asn) or phospho-Glu-tRNA(Gln). This Novosphingobium aromaticivorans (strain ATCC 700278 / DSM 12444 / CCUG 56034 / CIP 105152 / NBRC 16084 / F199) protein is Aspartyl/glutamyl-tRNA(Asn/Gln) amidotransferase subunit C.